Consider the following 129-residue polypeptide: Small ribosomal subunit protein uS11 (129 aa).

It belongs to the universal ribosomal protein uS11 family. Part of the 30S ribosomal subunit. Interacts with proteins S7 and S18. Binds to IF-3.

Functionally, located on the platform of the 30S subunit, it bridges several disparate RNA helices of the 16S rRNA. Forms part of the Shine-Dalgarno cleft in the 70S ribosome. This is Small ribosomal subunit protein uS11 from Nitrosomonas europaea (strain ATCC 19718 / CIP 103999 / KCTC 2705 / NBRC 14298).